A 300-amino-acid polypeptide reads, in one-letter code: Glutamyl-Q tRNA(Asp) synthetase (300 aa).

L-glutamate is bound by residues 14–18 and E50; that span reads RFAPT. The 'HIGH' region signature appears at 17–27; sequence PTPSGFLHFGS. C106, C108, Y120, and C124 together coordinate Zn(2+). The L-glutamate site is built by Y177 and R195. The 'KMSKS' region signature appears at 233–237; sequence KLGKS. Residue K236 coordinates ATP.

Belongs to the class-I aminoacyl-tRNA synthetase family. GluQ subfamily. Zn(2+) is required as a cofactor.

Functionally, catalyzes the tRNA-independent activation of glutamate in presence of ATP and the subsequent transfer of glutamate onto a tRNA(Asp). Glutamate is transferred on the 2-amino-5-(4,5-dihydroxy-2-cyclopenten-1-yl) moiety of the queuosine in the wobble position of the QUC anticodon. In Pseudomonas putida (strain ATCC 700007 / DSM 6899 / JCM 31910 / BCRC 17059 / LMG 24140 / F1), this protein is Glutamyl-Q tRNA(Asp) synthetase.